Consider the following 460-residue polypeptide: GTPase Der (460 aa).

2 consecutive EngA-type G domains span residues 2 to 164 and 199 to 370; these read KKVI…DDEI and IKVG…ANFT. GTP is bound by residues 8–15, 55–59, 116–119, 205–212, 252–256, and 316–319; these read GRPNVGKS, DSGGL, NKID, GRVNVGKS, DTAGI, and NKWD. One can recognise a KH-like domain in the interval 371 to 454; the sequence is QKIATSKLND…PVILLPRKRG (84 aa).

Belongs to the TRAFAC class TrmE-Era-EngA-EngB-Septin-like GTPase superfamily. EngA (Der) GTPase family. As to quaternary structure, associates with the 50S ribosomal subunit.

Its function is as follows. GTPase that plays an essential role in the late steps of ribosome biogenesis. The chain is GTPase Der from Campylobacter hominis (strain ATCC BAA-381 / DSM 21671 / CCUG 45161 / LMG 19568 / NCTC 13146 / CH001A).